We begin with the raw amino-acid sequence, 137 residues long: Protein shisa-5 (137 aa).

A helical transmembrane segment spans residues 3 to 23; sequence FGATLAVGLTIFVLSVVTIII.

This sequence belongs to the shisa family. In terms of assembly, interacts with PDCD6; PDCD6 can stabilize SHISA5.

The protein resides in the endoplasmic reticulum membrane. Its subcellular location is the nucleus membrane. Its function is as follows. Can induce apoptosis in a caspase-dependent manner and plays a role in p53/TP53-dependent apoptosis. The sequence is that of Protein shisa-5 (SHISA5) from Pongo abelii (Sumatran orangutan).